A 358-amino-acid chain; its full sequence is Putative pyruvyl transferase EpsI (358 aa).

It belongs to the polysaccharide pyruvyl transferase family.

Its function is as follows. May be involved in the production of the exopolysaccharide (EPS) component of the extracellular matrix during biofilm formation. EPS is responsible for the adhesion of chains of cells into bundles. The protein is Putative pyruvyl transferase EpsI (epsI) of Bacillus subtilis (strain 168).